The following is a 1673-amino-acid chain: MNFQYLVKIVAGSYYNISSSILSKIINSVIMAGLYYGFLTALALKTSYILLIHAMVRENPNHKAAAITGLILGQLGQLLSIYYAPLYIAFGRPYTLTVLTLIYFLVNLFGNNLDKNASSFGAYGNTIRNLEILCIFLNNLILQLLNTCIFPSSTLARVVNVYLFRCNNKMVFLISSFSAWLIGQILVLMCCQLVLGRGQNKNSIRSLIQKYLVRNSMFFLVVNCLFGSSLFILTIQSLGRIPLPIPTQKLSEISRIEKREEERLKKSGVAKEGKSTEDEEDLSHEKDSLKKEPYSKLENEDEEIEKDIEQAIGTLLFDYKRWTRPFRYIKNNQFEQAVRNEMSQYFFATQQSDGKSRICFTYPVNLSMFWKGISFLSRDKNYSNKLNRHWVERNKKKLKSLKRDLVNRIKNLDKTLKIEFGTTRTRLCTCIHDDETKQEYVPEEYDPLLAGGYRGRIKKEQAILQKQENETLTHPLDTLIDVLENNTNAQLFKTNPIDNQKINFEEELRKKVPRWSYKLITELEQISYYRNPPDDHDIRTRKAKSLVVFDPSKHPNMETMEDNGNIQNNSSDKTINPQNNLTNLKPRTSENDPDDNTTEKEPKDDKSYSIRYSHQSDFRHGLIKDSMRSLRRKIVIKDLFKGNVHSPLFFERRKKKNLFSFSGLVKLKKLFIPGSAQKEFGDLKDSNKKLTIKDKKQQETKERIEIAEAWDSFELTQVLRGVLLVTQSSLRRDILLPSLIIIKNLGRILLFQSSELSDDFKELAKETHVPCTYNGVPLGEKEFPRNWLTEGIQIKILSPFCLKPWNEEKKPLPASENFCFLTIWGQETDQIFGRPRRRPSFFKPFLTKLDTTLKKINLFQFFKEKRTPESNMVKEQKVDDLSDNILNEFQFSKREKLEAITNRTSIIKTKLETIAEEKKKVTRDLDRSLSKKSLKRIRFKLVSNLFPFQSFLKLFIQEIYNLFLRNILLISGLLKKILNREKEKLINQSCSKNEKMKKVHKKFNFSLNRKSKPSTNFSNLSQAYVFYKISQQIASFSVCKLRSILNQQVKAIFVKPEIKEFFARHGLIQTQEMDKKSIQLRTPQWKHWLRVNSQHHLSQILWFSFGAKKENWRKKINRCNKQSLQKRNSSGNSNLDDSKNRNTDNLILNKNQKDNFEKCYRYDVLSSKFIKFEKKKISFIHRSPLSLTRQHQISYHKNMSQNFLFALPKNMSVKNLMGKSQRMHIPYIEKDFDRKYLSFENIEFSLKKKINIESWIPLTSRGNKTKTYNYEFLDELELMEFIDQIYKKEKELLFPCIERNNKIRNAKSKYSFIDWMGLNEELLKHPVTNLELWFFPEFVSLLNIYKLKPWVLQSQLLFSKLTFNKLLSKQQNQTTTKMNTETKNKQKSKVENEKNKKTENQQNAETKNKQKSKTENEGNKETENQQNDESEDDPQLAYIRSFMKKHLLFQLRGESIFKKSGFKNIQILCLLLRLMNQNEMLFSSIQRQKLNLHIMPEIGIKELTLEVLEEIGVPEFLKEKRVNFEPFPLYINKNGKFLMYQLLNMSLVHNIKYPTNNESRNQGVITTQKNNNMASHIPENILSSRRRRELRILMCLNHNKKKCESTEATNKSFIYKKKCAKIWEEQKSTIEFFIWPNSRFEDLTCMNRYWFYTNNGSRFSMLRIFMYLPLKNY.

6 helical membrane-spanning segments follow: residues 32-52, 70-90, 93-113, 130-150, 170-190, and 218-238; these read AGLY…ILLI, LILG…YIAF, PYTL…GNNL, LEIL…TCIF, MVFL…VLMC, and FFLV…IQSL. Composition is skewed to basic and acidic residues over residues 264–276 and 283–298; these read LKKS…GKST and SHEK…SKLE. 4 disordered regions span residues 264–302, 547–611, 1120–1146, and 1370–1433; these read LKKS…NEDE, VVFD…YSIR, NKQS…TDNL, and QQNQ…SEDD. The span at 562 to 586 shows a compositional bias: polar residues; that stretch reads DNGNIQNNSSDKTINPQNNLTNLKP. A compositionally biased stretch (basic and acidic residues) spans 597-611; that stretch reads TTEKEPKDDKSYSIR. Residues 1120–1135 show a composition bias toward polar residues; the sequence is NKQSLQKRNSSGNSNL. Residues 1370–1379 show a composition bias toward low complexity; the sequence is QQNQTTTKMN. Basic and acidic residues-rich tracts occupy residues 1380 to 1399 and 1406 to 1423; these read TETK…KKTE and TKNK…KETE.

It belongs to the TIC214 family. In terms of assembly, part of the Tic complex.

It is found in the plastid. It localises to the chloroplast inner membrane. Its function is as follows. Involved in protein precursor import into chloroplasts. May be part of an intermediate translocation complex acting as a protein-conducting channel at the inner envelope. This Cuscuta gronovii (Common dodder) protein is Protein TIC 214.